The sequence spans 673 residues: MTDSIKLEIEQLRQTLRYHEYQYHVLDNPQIPDAEYDRLFHRLKTLEQQYPQWFSPDSPTQRVGAKPLSAFAQVQHEMPMLSLDNAFSDEELHAFVKRIQDRLVFSPKLLEFCCEPKLDGLAVSILYVDGKLTQAATRGDGSTGEDITLNIRTVRNIPLQLLMENPPTRLEVRGEVFMSQAGFEVLNEKALARGEKTFANPRNAAAGSLRQLDPRITSQRPLLLNAYSIGVAEGIDLPDTHFERLQWLKSIGIPVNNEIQLCEGTENVLNFYRAIMQKRSTLGYDIDGTVIKVNDIALQEELGFISKAPRWAIAYKFPAQEELTVLNAVEFQVGRTGAITPVAKLQPVFVAGVTVSNATLHNGDEIARLDVAIGDTVIIRRAGDVIPQIIGVLHEKRPANAEKIVFPTECPVCGSVIVRIEGEAVARCTGGLFCAAQRKEALKHFVSRKAMDIDGVGAKLIEQLVDREQIHTPADLFKLDLNTLARLERMGLKSAQNALDSLQKAKKTTLARFIFALGIREVGEATALNLANHFKTLEALKEATLEQLQEVQDVGEVVANRIFVFWREPHNVAVVEDLIAQGIHWETVEVKDVGDNPFKEKTVVLTGTLTQMGRTEAKALLQQLGAKVSGSVSAKTDLVVAGDSAGSKLTKANELGVKVIDENTFLAWSKPYL.

Residues 33 to 37, 82 to 83, and Glu115 each bind NAD(+); these read DAEYD and SL. Lys117 acts as the N6-AMP-lysine intermediate in catalysis. 4 residues coordinate NAD(+): Arg138, Glu175, Lys292, and Lys316. Zn(2+) contacts are provided by Cys410, Cys413, Cys428, and Cys434. The BRCT domain occupies 593–673; that stretch reads VGDNPFKEKT…TFLAWSKPYL (81 aa).

Belongs to the NAD-dependent DNA ligase family. LigA subfamily. It depends on Mg(2+) as a cofactor. Mn(2+) is required as a cofactor.

The enzyme catalyses NAD(+) + (deoxyribonucleotide)n-3'-hydroxyl + 5'-phospho-(deoxyribonucleotide)m = (deoxyribonucleotide)n+m + AMP + beta-nicotinamide D-nucleotide.. Its function is as follows. DNA ligase that catalyzes the formation of phosphodiester linkages between 5'-phosphoryl and 3'-hydroxyl groups in double-stranded DNA using NAD as a coenzyme and as the energy source for the reaction. It is essential for DNA replication and repair of damaged DNA. This chain is DNA ligase, found in Pasteurella multocida (strain Pm70).